Here is a 310-residue protein sequence, read N- to C-terminus: GPN-loop GTPase 2 (310 aa).

Ala2 bears the N-acetylalanine mark. 19-24 is a binding site for GTP; it reads GSGKTT. The short motif at 76 to 78 is the Gly-Pro-Asn (GPN)-loop; involved in dimer interface element; that stretch reads GPN. 178–181 lines the GTP pocket; that stretch reads SKMD.

It belongs to the GPN-loop GTPase family. Heterodimers with GPN1 or GPN3. Binds to RNA polymerase II (RNAPII).

In terms of biological role, small GTPase required for proper localization of RNA polymerase II and III (RNAPII and RNAPIII). May act at an RNAP assembly step prior to nuclear import. This chain is GPN-loop GTPase 2, found in Rattus norvegicus (Rat).